A 511-amino-acid chain; its full sequence is 2-isopropylmalate synthase (511 aa).

Residues 6–269 enclose the Pyruvate carboxyltransferase domain; it reads IIIFDTTLRD…YTDIKCENIF (264 aa). Residues Asp-15, His-203, His-205, and Asn-239 each contribute to the Mn(2+) site. The tract at residues 394-511 is regulatory domain; the sequence is ILEKLSVISG…SLKVEERKMA (118 aa).

Belongs to the alpha-IPM synthase/homocitrate synthase family. LeuA type 1 subfamily. Homodimer. It depends on Mn(2+) as a cofactor.

The protein resides in the cytoplasm. The enzyme catalyses 3-methyl-2-oxobutanoate + acetyl-CoA + H2O = (2S)-2-isopropylmalate + CoA + H(+). Its pathway is amino-acid biosynthesis; L-leucine biosynthesis; L-leucine from 3-methyl-2-oxobutanoate: step 1/4. Functionally, catalyzes the condensation of the acetyl group of acetyl-CoA with 3-methyl-2-oxobutanoate (2-ketoisovalerate) to form 3-carboxy-3-hydroxy-4-methylpentanoate (2-isopropylmalate). The chain is 2-isopropylmalate synthase from Campylobacter jejuni subsp. jejuni serotype O:6 (strain 81116 / NCTC 11828).